The following is a 914-amino-acid chain: Neuropilin-1 (914 aa).

An N-terminal signal peptide occupies residues 1 to 18 (MDWGLFLHCAALTFTLSR). The Extracellular portion of the chain corresponds to 20–847 (LRSDKCGDTI…PGNVLKTLDP (828 aa)). Disulfide bonds link Cys-25–Cys-52, Cys-80–Cys-102, and Cys-145–Cys-171. 2 consecutive CUB domains span residues 25 to 139 (CGDT…YEVF) and 145 to 263 (CSRN…YSVS). N-linked (GlcNAc...) asparagine glycosylation occurs at Asn-148. 3 residues coordinate Ca(2+): Glu-193, Asp-207, and Asp-248. Cys-204 and Cys-226 are joined by a disulfide. Asn-259 carries an N-linked (GlcNAc...) asparagine glycan. Disulfide bonds link Cys-273–Cys-422 and Cys-429–Cys-581. F5/8 type C domains lie at 273–422 (CMEP…VYGC) and 429–581 (CSGM…LLGC). Asn-520 is a glycosylation site (N-linked (GlcNAc...) asparagine). Ser-610 carries an O-linked (Xyl...) (chondroitin sulfate) serine; alternate glycan. Ser-610 carries an O-linked (Xyl...) (heparan sulfate) serine; alternate glycan. The region spanning 636–801 (PYNLNCGFGW…NHISQEDCQK (166 aa)) is the MAM domain. Positions 809–829 (IVEEDPESNQTGFTPSYRTDE) are disordered. The span at 816–825 (SNQTGFTPSY) shows a compositional bias: polar residues. A glycan (N-linked (GlcNAc...) asparagine) is linked at Asn-817. A helical membrane pass occupies residues 848-870 (ILITIIAMSALGVLLGAICGVVL). At 871-914 (YCACWHNGMSERNLSALENYNFELVDGVKLKKDKLNTQNSYSEA) the chain is on the cytoplasmic side.

It belongs to the neuropilin family. In terms of assembly, homodimer, and heterodimer. Developing nervous system; optic tectum (layers D and E of SGFS), amacrine cells of retina, neurites of dorsal root ganglia. Also expressed in non-neuronal cells, e.g. blood vessels in the entire embryo.

The protein resides in the mitochondrion membrane. It is found in the cell membrane. In terms of biological role, receptor involved in the development of the cardiovascular system, in angiogenesis, in the formation of certain neuronal circuits and in organogenesis outside the nervous system. Mediates the chemorepulsant activity of semaphorins. Binding to VEGFA initiates a signaling pathway needed for motor neuron axon guidance and cell body migration, including for the caudal migration of facial motor neurons from rhombomere 4 to rhombomere 6 during embryonic development. Regulates mitochondrial iron transport via interaction. The sequence is that of Neuropilin-1 (NRP1) from Gallus gallus (Chicken).